A 155-amino-acid chain; its full sequence is Small ribosomal subunit protein uS7 (155 aa).

It belongs to the universal ribosomal protein uS7 family. In terms of assembly, part of the 30S ribosomal subunit. Contacts proteins S9 and S11.

One of the primary rRNA binding proteins, it binds directly to 16S rRNA where it nucleates assembly of the head domain of the 30S subunit. Is located at the subunit interface close to the decoding center, probably blocks exit of the E-site tRNA. The polypeptide is Small ribosomal subunit protein uS7 (Helicobacter acinonychis (strain Sheeba)).